Consider the following 273-residue polypeptide: DNA repair protein RecO (273 aa).

Belongs to the RecO family.

In terms of biological role, involved in DNA repair and RecF pathway recombination. The polypeptide is DNA repair protein RecO (Mycolicibacterium gilvum (strain PYR-GCK) (Mycobacterium gilvum (strain PYR-GCK))).